Consider the following 55-residue polypeptide: Large ribosomal subunit protein bL33A (55 aa).

The protein belongs to the bacterial ribosomal protein bL33 family.

The protein is Large ribosomal subunit protein bL33A of Mycobacterium sp. (strain KMS).